The sequence spans 267 residues: Tryptophan synthase alpha chain (267 aa).

Catalysis depends on proton acceptor residues Glu49 and Asp60.

This sequence belongs to the TrpA family. As to quaternary structure, tetramer of two alpha and two beta chains.

The catalysed reaction is (1S,2R)-1-C-(indol-3-yl)glycerol 3-phosphate + L-serine = D-glyceraldehyde 3-phosphate + L-tryptophan + H2O. Its pathway is amino-acid biosynthesis; L-tryptophan biosynthesis; L-tryptophan from chorismate: step 5/5. The alpha subunit is responsible for the aldol cleavage of indoleglycerol phosphate to indole and glyceraldehyde 3-phosphate. This is Tryptophan synthase alpha chain from Acinetobacter baylyi (strain ATCC 33305 / BD413 / ADP1).